The sequence spans 205 residues: Putative 3-methyladenine DNA glycosylase (205 aa).

This sequence belongs to the DNA glycosylase MPG family.

The protein is Putative 3-methyladenine DNA glycosylase of Clostridium acetobutylicum (strain ATCC 824 / DSM 792 / JCM 1419 / IAM 19013 / LMG 5710 / NBRC 13948 / NRRL B-527 / VKM B-1787 / 2291 / W).